The sequence spans 121 residues: MIQQETYLTVADNSGAKRLQCIRVLGSNRRYAHVGDVVVASVKDALPNMGVKKSDVVKAVIVRTRHTLRRNTGNSIRFDDNAAVLINEDKNPKGTRVFGPVARELRDKNFTKIVSLAPEVI.

Belongs to the universal ribosomal protein uL14 family. Part of the 50S ribosomal subunit. Forms a cluster with proteins L3 and L19. In the 70S ribosome, L14 and L19 interact and together make contacts with the 16S rRNA in bridges B5 and B8.

In terms of biological role, binds to 23S rRNA. Forms part of two intersubunit bridges in the 70S ribosome. The polypeptide is Large ribosomal subunit protein uL14 (Prochlorococcus marinus (strain MIT 9515)).